The sequence spans 54 residues: UPF0391 membrane protein Tbd_2238 (54 aa).

2 helical membrane-spanning segments follow: residues 5-25 (ALVF…GIAA) and 28-48 (VGIA…TFVV).

Belongs to the UPF0391 family.

It is found in the cell membrane. In Thiobacillus denitrificans (strain ATCC 25259 / T1), this protein is UPF0391 membrane protein Tbd_2238.